The chain runs to 457 residues: Multidrug resistance protein MdtK (457 aa).

12 helical membrane passes run 11-31, 53-73, 93-113, 127-147, 160-180, 189-209, 243-263, 276-296, 314-334, 350-370, 387-407, and 418-438; these read LLAL…MGFV, IWLP…PVIA, WLAG…GYII, AVGY…FQVA, GMVM…IFIY, GGVG…LAMV, LPIA…ALLV, IALN…AAVT, AART…IFTV, VVTL…SDSI, IFYI…YILA, and PAGF…MMML.

It belongs to the multi antimicrobial extrusion (MATE) (TC 2.A.66.1) family. MdtK subfamily.

The protein resides in the cell inner membrane. Functionally, multidrug efflux pump that functions probably as a Na(+)/drug antiporter. The sequence is that of Multidrug resistance protein MdtK from Escherichia coli O139:H28 (strain E24377A / ETEC).